The sequence spans 429 residues: Histidine--tRNA ligase (429 aa).

This sequence belongs to the class-II aminoacyl-tRNA synthetase family. Homodimer.

Its subcellular location is the cytoplasm. It catalyses the reaction tRNA(His) + L-histidine + ATP = L-histidyl-tRNA(His) + AMP + diphosphate + H(+). The protein is Histidine--tRNA ligase of Prochlorococcus marinus (strain MIT 9515).